The chain runs to 2492 residues: Transcriptional regulator ATRX (2492 aa).

The disordered stretch occupies residues 1-146 (MTAEPMSESK…DKDDFKGPEF (146 aa)). A Glycyl lysine isopeptide (Lys-Gly) (interchain with G-Cter in SUMO2) cross-link involves residue Lys10. Positions 17–27 (KLHDFLAHSSE) are enriched in basic and acidic residues. Phosphoserine is present on residues Ser25 and Ser34. Polar residues predominate over residues 40–57 (MNQNTDKISGSGSNSDMM). Over residues 58-72 (ENSKEEGTSSSEKSK) the composition is skewed to basic and acidic residues. Tyr89 carries the post-translational modification Phosphotyrosine. A phosphoserine mark is found at Ser92 and Ser112. Residues 92-108 (SDDEKPLDDETVNEDAS) are compositionally biased toward acidic residues. Basic and acidic residues predominate over residues 135 to 146 (NEDKDDFKGPEF). Residues Lys138 and Lys142 each participate in a glycyl lysine isopeptide (Lys-Gly) (interchain with G-Cter in SUMO2) cross-link. Residues 159–296 (KRGEDGLHGI…LEQLLQQNKK (138 aa)) enclose the ADD domain. A GATA-type; atypical zinc finger spans residues 170–206 (SCTACGQQVNHFQKDSIYRHPSLQVLICKNCFKYYMS). Position 213 is a phosphoserine (Ser213). The segment at 217 to 272 (DEQCRWCAEGGNLICCDFCHNAFCKKCILRNLGRKELSTIMDENNQWYCYICHPEP) adopts a PHD-type; atypical zinc-finger fold. Residue Lys299 forms a Glycyl lysine isopeptide (Lys-Gly) (interchain with G-Cter in SUMO2) linkage. Ser316 carries the post-translational modification Phosphoserine. A Glycyl lysine isopeptide (Lys-Gly) (interchain with G-Cter in SUMO2) cross-link involves residue Lys438. The segment covering 445–502 (KGEKPCALEKKDISKSEAKLSRKQVDSEHMDQNVPTEEQRANKSTGGEHKKSDRKEEP) has biased composition (basic and acidic residues). A disordered region spans residues 445 to 614 (KGEKPCALEK…CQEVPQDKDG (170 aa)). Positions 550–567 (SGTEQEVESSSVKLNISS) are enriched in polar residues. The short motif at 581–594 (KVTKELYVKLTPVS) is the PxVxL motif element. A Phosphothreonine modification is found at Thr591. A phosphoserine mark is found at Ser594 and Ser598. A Glycyl lysine isopeptide (Lys-Gly) (interchain with G-Cter in SUMO1); alternate cross-link involves residue Lys623. A Glycyl lysine isopeptide (Lys-Gly) (interchain with G-Cter in SUMO2); alternate cross-link involves residue Lys623. Residue Ser634 is modified to Phosphoserine. The interval 648–1479 (LEESDLRRSP…SKSPGKGRKK (832 aa)) is disordered. A Phosphothreonine modification is found at Thr674. 4 positions are modified to phosphoserine: Ser675, Ser677, Ser729, and Ser731. Residues 755–777 (NEIHTNHKTLYDLKTQAGKDDKG) show a composition bias toward basic and acidic residues. Residues Ser784, Ser819, Ser849, Ser850, Ser875, and Ser876 each carry the phosphoserine modification. Residues 843–864 (NTKDFDSSEDEKHSKKGMDNQG) are compositionally biased toward basic and acidic residues. Residues 878 to 887 (DAERKQEREN) are compositionally biased toward basic and acidic residues. Position 889 is a phosphoserine (Ser889). Basic and acidic residues-rich tracts occupy residues 894-909 (TVDK…DRLP) and 920-944 (GVDK…ETKE). Positions 945–955 (KSKHLKTKTCK) are enriched in basic residues. Ser962 is subject to Phosphoserine. Over residues 964–1004 (TAEKFLKKDQSDETSEDDKKQSKKGTEEKKKPSDFKKKVIK) the composition is skewed to basic and acidic residues. Lys967 carries the post-translational modification N6-acetyllysine. Ser974 is subject to Phosphoserine. Thr977 is modified (phosphothreonine). Lys1004 participates in a covalent cross-link: Glycyl lysine isopeptide (Lys-Gly) (interchain with G-Cter in SUMO2). Ser1011, Ser1012, and Ser1013 each carry phosphoserine. The segment covering 1015 to 1027 (GTEKLPEREEICH) has biased composition (basic and acidic residues). Residues 1045–1055 (KSKKIRDKTSK) are compositionally biased toward basic residues. The segment covering 1056-1082 (KKDELSDYAEKSTGKGDSCDSSEDKKS) has biased composition (basic and acidic residues). Phosphoserine is present on Ser1061. Phosphotyrosine is present on Tyr1063. Residues 1090-1102 (EKKRCKLLGKSSR) are compositionally biased toward basic residues. Over residues 1103 to 1139 (KRQDCSSSDTEKYSMKEDGCNSSDKRLKRIELRERRN) the composition is skewed to basic and acidic residues. The span at 1168–1195 (KQQRTSSKKKAVIVKEKKRNSLRTSTKR) shows a compositional bias: basic residues. The interaction with DAXX stretch occupies residues 1189–1326 (LRTSTKRKQA…KNQVNSESDS (138 aa)). A compositionally biased stretch (polar residues) spans 1233–1246 (LVLSSHTGFCQSSG). Ser1244, Ser1245, and Ser1253 each carry phosphoserine. Positions 1267–1281 (PENRIAKKMLLEEIK) are enriched in basic and acidic residues. Over residues 1286–1297 (SDEDGSSDDEPE) the composition is skewed to acidic residues. A compositionally biased stretch (basic and acidic residues) spans 1298–1308 (EGKKRTGKQNE). Ser1322, Ser1324, and Ser1326 each carry phosphoserine. Residues 1334–1345 (PRYRHRLLRHKL) are compositionally biased toward basic residues. Phosphoserine occurs at positions 1348 and 1352. 2 stretches are compositionally biased toward basic and acidic residues: residues 1353 to 1368 (GEEK…EVKG) and 1408 to 1417 (KKAELEENQR). Basic residues predominate over residues 1419-1428 (YKQKKKRRRI). Acidic residues predominate over residues 1443–1468 (EEEEEEKEEEEEEEEEEEEEEEDEND). Lys1488 is covalently cross-linked (Glycyl lysine isopeptide (Lys-Gly) (interchain with G-Cter in SUMO2)). A Phosphoserine modification is found at Ser1527. Thr1529 carries the phosphothreonine modification. One can recognise a Helicase ATP-binding domain in the interval 1581-1768 (KTKKSPGSGC…HCMVNFIKEN (188 aa)). 1594 to 1601 (HCMGLGKT) contacts ATP. Positions 1719–1722 (DEGH) match the DEGH box motif. Phosphoserine is present on residues Ser1906 and Ser1913. The segment at 1913-2000 (SDSDETSMSL…SSNPSSPAPD (88 aa)) is disordered. The span at 1929–1938 (KKKKKGKKGK) shows a compositional bias: basic residues. Residue Lys1982 forms a Glycyl lysine isopeptide (Lys-Gly) (interchain with G-Cter in SUMO1); alternate linkage. Lys1982 is covalently cross-linked (Glycyl lysine isopeptide (Lys-Gly) (interchain with G-Cter in SUMO2); alternate). A Glycyl lysine isopeptide (Lys-Gly) (interchain with G-Cter in SUMO2) cross-link involves residue Lys1987. A compositionally biased stretch (low complexity) spans 1990–1999 (SSSNPSSPAP). Residues Ser1992 and Ser1996 each carry the phosphoserine modification. Positions 2010–2280 (DAEVLEHSGK…RKAAWAEYEA (271 aa)) are interaction with MECP2. Positions 2025-2205 (EILRMAEEIG…ERHFTMNELT (181 aa)) constitute a Helicase C-terminal domain. Ser2220 carries the phosphoserine modification. Residues 2462–2492 (PVAGGMQPPPLQRAPPPMRSKNPGPSQGKSM) are disordered. Residues 2468–2479 (QPPPLQRAPPPM) show a composition bias toward pro residues. Residues Arg2474 and Arg2480 each carry the omega-N-methylarginine modification.

Belongs to the SNF2/RAD54 helicase family. As to quaternary structure, interacts with DAXX to form the chromatin remodeling complex ATRX:DAXX. Probably binds EZH2. Binds annexin V in a calcium and phosphatidylcholine/phosphatidylserine-dependent manner. Interacts directly with CBX5 via the PxVxL motif. Interacts with RAD50, MRE11 and NBN; indicative for an association with the MRN complex. Interacts with histone MACROH2A1. Interacts with histone H3 peptides methylated at 'Lys-10' with preferences H3K9me3 &gt; H3K9me2 &gt; H3K9me1. Interacts with histone H3 peptides unmethylated at 'Lys-5' (H3K4me0). Interacts with MECP2, SMC1 and SMC3. Interacts with SETDB1, TRIM28 and ZNF274.

It is found in the nucleus. The protein localises to the chromosome. Its subcellular location is the telomere. It localises to the PML body. The catalysed reaction is ATP + H2O = ADP + phosphate + H(+). Functionally, involved in transcriptional regulation and chromatin remodeling. Facilitates DNA replication in multiple cellular environments and is required for efficient replication of a subset of genomic loci. Binds to DNA tandem repeat sequences in both telomeres and euchromatin and in vitro binds DNA quadruplex structures. May help stabilizing G-rich regions into regular chromatin structures by remodeling G4 DNA and incorporating H3.3-containing nucleosomes. Catalytic component of the chromatin remodeling complex ATRX:DAXX which has ATP-dependent DNA translocase activity and catalyzes the replication-independent deposition of histone H3.3 in pericentric DNA repeats outside S-phase and telomeres, and the in vitro remodeling of H3.3-containing nucleosomes. Its heterochromatin targeting is proposed to involve a combinatorial readout of histone H3 modifications (specifically methylation states of H3K9 and H3K4) and association with CBX5. Involved in maintaining telomere structural integrity in embryonic stem cells which probably implies recruitment of CBX5 to telomeres. May be involved in transcriptional regulation of telomeric repeat-containing RNA (TERRA). Acts as a negative regulator of chromatin incorporation of transcriptionally repressive histone MACROH2A1, particularily at telomeres. Participates in the allele-specific gene expression at the imprinted IGF2/H19 gene locus. On the maternal allele, required for the chromatin occupancy of SMC1 and CTCTF within the H19 imprinting control region (ICR) and involved in esatblishment of histone tails modifications in the ICR. May be involved in brain development and facial morphogenesis. Binds to zinc-finger coding genes with atypical chromatin signatures and regulates its H3K9me3 levels. Forms a complex with ZNF274, TRIM28 and SETDB1 to facilitate the deposition and maintenance of H3K9me3 at the 3' exons of zinc-finger genes. This chain is Transcriptional regulator ATRX (ATRX), found in Pan troglodytes (Chimpanzee).